The chain runs to 341 residues: UDP-3-O-(3-hydroxymyristoyl)glucosamine N-acyltransferase (341 aa).

His-239 functions as the Proton acceptor in the catalytic mechanism.

The protein belongs to the transferase hexapeptide repeat family. LpxD subfamily. In terms of assembly, homotrimer.

The enzyme catalyses a UDP-3-O-[(3R)-3-hydroxyacyl]-alpha-D-glucosamine + a (3R)-hydroxyacyl-[ACP] = a UDP-2-N,3-O-bis[(3R)-3-hydroxyacyl]-alpha-D-glucosamine + holo-[ACP] + H(+). It catalyses the reaction UDP-3-O-[(3R)-3-hydroxytetradecanoyl]-alpha-D-glucosamine + (3R)-hydroxytetradecanoyl-[ACP] = UDP-2-N,3-O-bis[(3R)-3-hydroxytetradecanoyl]-alpha-D-glucosamine + holo-[ACP] + H(+). The protein operates within glycolipid biosynthesis; lipid IV(A) biosynthesis; lipid IV(A) from (3R)-3-hydroxytetradecanoyl-[acyl-carrier-protein] and UDP-N-acetyl-alpha-D-glucosamine: step 3/6. In terms of biological role, catalyzes the N-acylation of UDP-3-O-(hydroxytetradecanoyl)glucosamine using 3-hydroxytetradecanoyl-ACP as the acyl donor. Is involved in the biosynthesis of lipid A, a phosphorylated glycolipid that anchors the lipopolysaccharide to the outer membrane of the cell. This is UDP-3-O-(3-hydroxymyristoyl)glucosamine N-acyltransferase from Escherichia coli O157:H7.